A 433-amino-acid polypeptide reads, in one-letter code: Inward rectifier potassium channel 18 (433 aa).

The Cytoplasmic portion of the chain corresponds to methionine 1–aspartate 77. Residues isoleucine 78–valine 104 traverse the membrane as a helical segment. The Extracellular segment spans residues isoleucine 105–glycine 129. Residues phenylalanine 130–tyrosine 146 constitute an intramembrane region (helical; Pore-forming). A Selectivity filter motif is present at residues threonine 143–leucine 148. Topologically, residues glycine 147–cysteine 155 are extracellular. The chain crosses the membrane as a helical span at residues leucine 156–lysine 183. Residues methionine 184–isoleucine 433 are Cytoplasmic-facing. Residues aspartate 387–isoleucine 433 form a disordered region. A compositionally biased stretch (basic and acidic residues) spans glutamine 396 to arginine 414.

This sequence belongs to the inward rectifier-type potassium channel (TC 1.A.2.1) family. KCNJ12 subfamily. As to quaternary structure, can form heteromeric channels with Kir2.1/KCNJ2. Can form heteromeric channels with Kir2.2/KCNJ12. In terms of processing, probably phosphorylated by PKC; decreases single-channel open probability. Specifically expressed in skeletal muscle.

It localises to the cell membrane. Its subcellular location is the endoplasmic reticulum. It carries out the reaction K(+)(in) = K(+)(out). Inward rectifier potassium channels are characterized by a greater tendency to allow potassium to flow into the cell rather than out of it. Their voltage dependence is regulated by the concentration of extracellular potassium; as external potassium is raised, the voltage range of the channel opening shifts to more positive voltages. The inward rectification is mainly due to the blockage of outward current by internal magnesium. The protein is Inward rectifier potassium channel 18 (KCNJ18) of Homo sapiens (Human).